Reading from the N-terminus, the 99-residue chain is Large ribosomal subunit protein uL23c (99 aa).

Belongs to the universal ribosomal protein uL23 family. Part of the 50S ribosomal subunit.

It is found in the plastid. The protein localises to the chloroplast. Its function is as follows. Binds to 23S rRNA. In Emiliania huxleyi (Coccolithophore), this protein is Large ribosomal subunit protein uL23c (rpl23).